We begin with the raw amino-acid sequence, 226 residues long: ATP synthase F(0) complex subunit a (226 aa).

5 helical membrane-spanning segments follow: residues 9–29, 68–88, 97–117, 138–158, and 184–204; these read FITP…FPSL, WTLM…LGLL, QLSM…ITGF, IPML…ALAV, and ISPT…ILEF.

It belongs to the ATPase A chain family. As to quaternary structure, component of the ATP synthase complex composed at least of ATP5F1A/subunit alpha, ATP5F1B/subunit beta, ATP5MC1/subunit c (homooctomer), MT-ATP6/subunit a, MT-ATP8/subunit 8, ATP5ME/subunit e, ATP5MF/subunit f, ATP5MG/subunit g, ATP5MK/subunit k, ATP5MJ/subunit j, ATP5F1C/subunit gamma, ATP5F1D/subunit delta, ATP5F1E/subunit epsilon, ATP5PF/subunit F6, ATP5PB/subunit b, ATP5PD/subunit d, ATP5PO/subunit OSCP. ATP synthase complex consists of a soluble F(1) head domain (subunits alpha(3) and beta(3)) - the catalytic core - and a membrane F(0) domain - the membrane proton channel (subunits c, a, 8, e, f, g, k and j). These two domains are linked by a central stalk (subunits gamma, delta, and epsilon) rotating inside the F1 region and a stationary peripheral stalk (subunits F6, b, d, and OSCP). Interacts with DNAJC30; interaction is direct.

It is found in the mitochondrion inner membrane. The catalysed reaction is H(+)(in) = H(+)(out). Functionally, subunit a, of the mitochondrial membrane ATP synthase complex (F(1)F(0) ATP synthase or Complex V) that produces ATP from ADP in the presence of a proton gradient across the membrane which is generated by electron transport complexes of the respiratory chain. ATP synthase complex consist of a soluble F(1) head domain - the catalytic core - and a membrane F(1) domain - the membrane proton channel. These two domains are linked by a central stalk rotating inside the F(1) region and a stationary peripheral stalk. During catalysis, ATP synthesis in the catalytic domain of F(1) is coupled via a rotary mechanism of the central stalk subunits to proton translocation. With the subunit c (ATP5MC1), forms the proton-conducting channel in the F(0) domain, that contains two crucial half-channels (inlet and outlet) that facilitate proton movement from the mitochondrial intermembrane space (IMS) into the matrix. Protons are taken up via the inlet half-channel and released through the outlet half-channel, following a Grotthuss mechanism. The sequence is that of ATP synthase F(0) complex subunit a from Capra hircus (Goat).